The chain runs to 133 residues: Large ribosomal subunit protein uL14 (133 aa).

Belongs to the universal ribosomal protein uL14 family. As to quaternary structure, part of the 50S ribosomal subunit. Forms a cluster with proteins L3 and L19. In the 70S ribosome, L14 and L19 interact and together make contacts with the 16S rRNA in bridges B5 and B8.

In terms of biological role, binds to 23S rRNA. Forms part of two intersubunit bridges in the 70S ribosome. This chain is Large ribosomal subunit protein uL14, found in Gloeobacter violaceus (strain ATCC 29082 / PCC 7421).